We begin with the raw amino-acid sequence, 382 residues long: Kelch domain-containing protein 3 (382 aa).

Kelch repeat units lie at residues 25–77 (RVYS…PYMR), 88–138 (TVLL…VLGK), 139–189 (IMYI…TMLG), 191–249 (HMYV…GYNG), and 251–301 (LYIF…IVGD).

In terms of assembly, component of a CRL2(KLHDC3) complex, also named ECS(KLHDC3) complex, composed of CUL2, Elongin BC (ELOB and ELOC), RBX1 and substrate-specific adapter KLHDC3. May form oligomers as a KLHDC3-ELOB-ELOC complex; this interaction is likely autoinhibitory for the E3 ligase complex.

It localises to the cytoplasm. Its pathway is protein modification; protein ubiquitination. In terms of biological role, substrate-recognition component of a Cul2-RING (CRL2) E3 ubiquitin-protein ligase complex of the DesCEND (destruction via C-end degrons) pathway, which recognizes a C-degron located at the extreme C terminus of target proteins, leading to their ubiquitination and degradation. The C-degron recognized by the DesCEND pathway is usually a motif of less than ten residues and can be present in full-length proteins, truncated proteins or proteolytically cleaved forms. The CRL2(KLHDC3) complex specifically recognizes proteins with a glycine (Gly) at the C-terminus, leading to their ubiquitination and degradation: recognizes the C-terminal -Arg-(Xaa)n-Arg-Gly, -Arg-(Xaa)n-Lys-Gly, and -Arg-(Xaa)n-Gln-Gly degrons. The CRL2(KLHDC3) complex mediates ubiquitination and degradation of truncated SELENOV and SEPHS2 selenoproteins produced by failed UGA/Sec decoding, which end with a glycine. May be involved in meiotic recombination process. The chain is Kelch domain-containing protein 3 from Homo sapiens (Human).